Here is a 382-residue protein sequence, read N- to C-terminus: Histone acetyltransferase type B subunit 2 (382 aa).

5 WD repeats span residues 98–138 (ENNA…RYSH), 141–181 (PHTK…TTFK), 184–224 (IQKD…VVSQ), 228–268 (ESSN…ENSG), and 275–315 (GHSE…EEQQ). The segment at 317–321 (EDAED) is interaction with the histone H4 N-terminus. The stretch at 332-372 (GHTAGVSDLSWCPFKDWMIGSVADDNIVHLWEISKKLITNE) is one WD 6 repeat.

This sequence belongs to the WD repeat RBAP46/RBAP48/MSI1 family. Component of the HAT-B complex composed of at least HAT1 and HAT2. The HAT-B complex binds to histone H4 tail.

The protein localises to the cytoplasm. It is found in the nucleus. Its function is as follows. Regulatory subunit of the histone acetylase B (HAT-B) complex. The complex acetylates 'Lys-14' of histone H4 which is required for telomeric silencing. The sequence is that of Histone acetyltransferase type B subunit 2 (HAT2) from Candida albicans (strain SC5314 / ATCC MYA-2876) (Yeast).